The sequence spans 163 residues: Lipoprotein signal peptidase (163 aa).

4 consecutive transmembrane segments (helical) span residues Ala-9–Leu-29, Ile-42–Gly-62, Trp-67–Leu-87, and Ser-93–Ile-113. Residues Asp-123 and Asp-141 contribute to the active site. A helical membrane pass occupies residues Phe-137 to Leu-157.

It belongs to the peptidase A8 family.

It localises to the cell inner membrane. The enzyme catalyses Release of signal peptides from bacterial membrane prolipoproteins. Hydrolyzes -Xaa-Yaa-Zaa-|-(S,diacylglyceryl)Cys-, in which Xaa is hydrophobic (preferably Leu), and Yaa (Ala or Ser) and Zaa (Gly or Ala) have small, neutral side chains.. It functions in the pathway protein modification; lipoprotein biosynthesis (signal peptide cleavage). Functionally, this protein specifically catalyzes the removal of signal peptides from prolipoproteins. The protein is Lipoprotein signal peptidase of Coxiella burnetii (strain RSA 493 / Nine Mile phase I).